Reading from the N-terminus, the 290-residue chain is MEVSLNHPASNTTSTKNNNSAFFYFESCQPPSPALLLLCIAYTVVLIVGLFGNLSLIIIIFKKQRKAQNFTSILIANLSLSDTLVCVMCIHFTIIYTLMDHWIFGDTMCRLTSYVQSVSISVSIFSLVFTAVERYQLIVNPRGWKPSVTHAYWGITLIWLFSLLLSIPFFLSYHLTDEPFRNLSLPTDLYTHQVACVENWPSKKDRLLFTTSLFLLQYFVPLGFILICYLKIVICLRRRNAKVDKKKENEGRLNENKRINTMLISIVVTFGACWLPRISSMSSLTGIMRC.

The Extracellular portion of the chain corresponds to 1–39; the sequence is MEVSLNHPASNTTSTKNNNSAFFYFESCQPPSPALLLLC. A glycan (N-linked (GlcNAc...) asparagine) is linked at Asn-11. Residues 40–60 form a helical membrane-spanning segment; the sequence is IAYTVVLIVGLFGNLSLIIII. Topologically, residues 61–83 are cytoplasmic; the sequence is FKKQRKAQNFTSILIANLSLSDT. The chain crosses the membrane as a helical span at residues 84 to 104; it reads LVCVMCIHFTIIYTLMDHWIF. Topologically, residues 105-111 are extracellular; the sequence is GDTMCRL. Cysteines 109 and 196 form a disulfide. The chain crosses the membrane as a helical span at residues 112-132; that stretch reads TSYVQSVSISVSIFSLVFTAV. The Cytoplasmic portion of the chain corresponds to 133-150; it reads ERYQLIVNPRGWKPSVTH. A helical transmembrane segment spans residues 151–171; sequence AYWGITLIWLFSLLLSIPFFL. Topologically, residues 172-206 are extracellular; that stretch reads SYHLTDEPFRNLSLPTDLYTHQVACVENWPSKKDR. The helical transmembrane segment at 207 to 227 threads the bilayer; it reads LLFTTSLFLLQYFVPLGFILI. At 228–258 the chain is on the cytoplasmic side; that stretch reads CYLKIVICLRRRNAKVDKKKENEGRLNENKR. Residues 259 to 279 traverse the membrane as a helical segment; it reads INTMLISIVVTFGACWLPRIS. The Extracellular portion of the chain corresponds to 280 to 290; sequence SMSSLTGIMRC.

It belongs to the G-protein coupled receptor 1 family. In terms of tissue distribution, expressed in heart, skeletal muscle, gastrointestinal tissues, spleen, brain and adrenal glands.

It is found in the membrane. Functionally, when expressed, is unable to bind pancreatic polypeptide (PP), neuropeptide Y (NPY), or peptide YY (PYY), suggesting that either it is functionally inactive or that it may have acquired a pancreatic polypeptide-independent function. This Homo sapiens (Human) protein is Putative neuropeptide Y receptor type 6 (NPY6R).